The primary structure comprises 249 residues: Spindlin-4 (249 aa).

Tudor-like domain regions lie at residues 41–90 (VGCR…LELH), 119–168 (VGKA…YTLL), and 201–246 (VGKQ…YGLV). 3 histone H3K4me3 and H3R8me2a binding regions span residues 80-85 (GKDSVY), glutamate 128, and 237-239 (DIH).

This sequence belongs to the SPIN/STSY family. In terms of assembly, interacts with C11orf84/SPINDOC. Associates with chromatin.

It is found in the cytoplasm. Its subcellular location is the nucleus. Binds to acetylated and methylated histones, including H3K4me3 and H4K20me3, probably acting as a histone reader that recognizes chromatin marks to mediate downstream cellular effects. Promotes canonical WNT signaling, and is involved in the down-regulation of cell proliferation. This is Spindlin-4 (Spin4) from Mus musculus (Mouse).